The chain runs to 35 residues: Photosystem I reaction center subunit Z (35 aa).

A helical transmembrane segment spans residues 10 to 30 (LVIITTLVVPFMAAAALLFII).

As to quaternary structure, the G.violaceus PSI reaction center is composed of one copy each of PsaA,B,C,D,E,F,L,M and Z, and forms trimeric complexes.

It is found in the cell inner membrane. The polypeptide is Photosystem I reaction center subunit Z (psaZ) (Gloeobacter violaceus (strain ATCC 29082 / PCC 7421)).